Reading from the N-terminus, the 337-residue chain is G-protein coupled receptor 65 (337 aa).

The Extracellular segment spans residues 1–5; it reads MNSTC. N-linked (GlcNAc...) asparagine glycosylation occurs at N2. 2 disulfide bridges follow: C5–C160 and C87–C170. Residues 6 to 42 traverse the membrane as a helical segment; sequence IEEQHDLDHYLFPIVYIFVIIVSIPANIGSLCVSFLQ. At 43 to 46 the chain is on the cytoplasmic side; it reads AKKE. The helical transmembrane segment at 47–77 threads the bilayer; that stretch reads SELGIYLFSLSLSDLLYALTLPLWIDYTWNK. Topologically, residues 78 to 82 are extracellular; sequence DNWTF. An N-linked (GlcNAc...) asparagine glycan is attached at N79. A helical membrane pass occupies residues 83 to 118; sequence SPALCKGSAFLMYMNFYSSTAFLTCIAVDRYLAVVY. The Cytoplasmic portion of the chain corresponds to 119–126; sequence PLKFFFLR. A helical transmembrane segment spans residues 127-153; sequence TRRFALMVSLSIWILETIFNAVMLWED. The Extracellular segment spans residues 154 to 174; that stretch reads ETVVEYCDAEKSNFTLCYDKY. Positions 154-174 are extracellular loop 2 (ECL2); that stretch reads ETVVEYCDAEKSNFTLCYDKY. N166 carries an N-linked (GlcNAc...) asparagine glycan. The helical transmembrane segment at 175–212 threads the bilayer; it reads PLEKWQINLNLFRTCTGYAIPLVTILICNRKVYQAVRH. Topologically, residues 213–216 are cytoplasmic; it reads NKAT. A helical membrane pass occupies residues 217 to 252; sequence ENKEKKRIIKLLVSITVTFVLCFTPFHVMLLIRCIL. The Extracellular segment spans residues 253-264; sequence EHAVNFEDHSNS. The chain crosses the membrane as a helical span at residues 265–293; sequence GKRTYTMYRITVALTSLNCVADPILYCFV. Over 294–337 the chain is Cytoplasmic; the sequence is TETGRYDMWNILKFCTGRCNTSQRQRKRILSVSTKDTMELEVLE.

The protein belongs to the G-protein coupled receptor 1 family. In terms of tissue distribution, predominantly expressed in thymus, spleen, lymph nodes, small intestine, lung, placenta and peripheral blood leukocytes.

Its subcellular location is the cell membrane. It localises to the early endosome membrane. It is found in the late endosome membrane. With respect to regulation, activated by a network of residues that connects an extracellular-facing cavity to Glu-142, a conserved charged residue buried in the transmembrane core of the receptor. Protonation likely drives conformational changes in extracellular loop 2 (ECL2), which stabilizes movement of transmembrane 3 (TM3) and a series of rearrangements that connect the extracellular-facing cavity to Glu-142, a residue only conserved in proton-sensing G-protein coupled receptors. Activated by BTB09089, a positive allosteric modulator. In terms of biological role, proton-sensing G-protein coupled receptor activated by extracellular pH, which is required to monitor pH changes and generate adaptive reactions. Activated by an optimal pH of 7.4. Ligand binding causes a conformation change that triggers signaling via guanine nucleotide-binding proteins (G proteins) and modulates the activity of downstream effectors, such as adenylate cyclase. GPR65 is mainly coupled to G(s) G proteins and mediates activation of adenylate cyclase activity. May also act as a receptor for the glycosphingolipid psychosine (PSY) and several related glycosphingolipids. Plays a role in immune response by maintaining lysosome function and regulating T-cell metabolism. Acts as a regulator of inflammation by mediating pH-sensing of extracellular acidification which takes place in inflamed tissues: activation regulates endo-lysosomal function of immune cells and T-cell metabolism. Constitutively active in endosomes and stimulates adenylate cyclase production from endosomes independently from extracellular pH changes. In Homo sapiens (Human), this protein is G-protein coupled receptor 65.